The chain runs to 353 residues: Nicotinate-nucleotide--dimethylbenzimidazole phosphoribosyltransferase (353 aa).

Glu-319 functions as the Proton acceptor in the catalytic mechanism.

The protein belongs to the CobT family.

It catalyses the reaction 5,6-dimethylbenzimidazole + nicotinate beta-D-ribonucleotide = alpha-ribazole 5'-phosphate + nicotinate + H(+). It participates in nucleoside biosynthesis; alpha-ribazole biosynthesis; alpha-ribazole from 5,6-dimethylbenzimidazole: step 1/2. Functionally, catalyzes the synthesis of alpha-ribazole-5'-phosphate from nicotinate mononucleotide (NAMN) and 5,6-dimethylbenzimidazole (DMB). This is Nicotinate-nucleotide--dimethylbenzimidazole phosphoribosyltransferase from Chlorobaculum parvum (strain DSM 263 / NCIMB 8327) (Chlorobium vibrioforme subsp. thiosulfatophilum).